Here is a 232-residue protein sequence, read N- to C-terminus: uncharacterized protein (232 aa).

Helical transmembrane passes span 4-24, 42-62, 100-120, 145-165, and 171-191; these read LLGV…YVFE, VLVG…LAVL, LFFI…ILHM, LAFV…FFTL, and GNLI…WVGF.

The protein localises to the cell membrane. This is an uncharacterized protein from Aquifex aeolicus (strain VF5).